Consider the following 364-residue polypeptide: Pre-mRNA-splicing factor SLT11 (364 aa).

Residues 331 to 364 are disordered; the sequence is KSTDNAKNDKKKTSKKVHKDRSKKSKPRANKLTI. Positions 339–364 are enriched in basic residues; sequence DKKKTSKKVHKDRSKKSKPRANKLTI.

This sequence belongs to the SLT11 family. Belongs to the CWC complex (or CEF1-associated complex), a spliceosome subcomplex composed of the U2, U5 and U6 snRNAs and at least BUD13, BUD31, BRR2, CDC40, CEF1, CLF1, CUS1, CWC2, CWC15, CWC21, CWC22, CWC23, CWC24, CWC25, CWC27, ECM2, HSH155, IST3, ISY1, LEA1, MSL1, NTC20, PRP8, PRP9, PRP11, PRP19, PRP21, PRP22, PRP45, PRP46, SLU7, SMB1, SMD1, SMD2, SMD3, SMX2, SMX3, SNT309, SNU114, SPP2, SYF1, SYF2, RSE1 and YJU2. Interacts with SLU7.

It is found in the nucleus. Functionally, involved in pre-mRNA splicing. Facilitates the cooperative formation of U2/U6 helix II in association with stem II in the spliceosome. Binds to RNA. This is Pre-mRNA-splicing factor SLT11 (ECM2) from Saccharomyces cerevisiae (strain ATCC 204508 / S288c) (Baker's yeast).